Here is a 156-residue protein sequence, read N- to C-terminus: Small ribosomal subunit protein uS7 (156 aa).

It belongs to the universal ribosomal protein uS7 family. As to quaternary structure, part of the 30S ribosomal subunit. Contacts proteins S9 and S11.

One of the primary rRNA binding proteins, it binds directly to 16S rRNA where it nucleates assembly of the head domain of the 30S subunit. Is located at the subunit interface close to the decoding center, probably blocks exit of the E-site tRNA. The protein is Small ribosomal subunit protein uS7 of Deinococcus deserti (strain DSM 17065 / CIP 109153 / LMG 22923 / VCD115).